A 355-amino-acid chain; its full sequence is Uroporphyrinogen decarboxylase (355 aa).

Residues R27–R31, D78, Y155, S210, and H328 each bind substrate.

The protein belongs to the uroporphyrinogen decarboxylase family. As to quaternary structure, homodimer.

Its subcellular location is the cytoplasm. The catalysed reaction is uroporphyrinogen III + 4 H(+) = coproporphyrinogen III + 4 CO2. Its pathway is porphyrin-containing compound metabolism; protoporphyrin-IX biosynthesis; coproporphyrinogen-III from 5-aminolevulinate: step 4/4. Functionally, catalyzes the decarboxylation of four acetate groups of uroporphyrinogen-III to yield coproporphyrinogen-III. The protein is Uroporphyrinogen decarboxylase of Pseudomonas aeruginosa (strain LESB58).